We begin with the raw amino-acid sequence, 259 residues long: MFHEIHRCQHADAPLLVLSSGLGGSSRYWADDLAALTRDHDVLVYDHAGTGRSPADLPADYSIRHMAMELLTLLDSLGIQRCHFMGHALGGLVGLEIALLRPELLQSQVLINAWSSPNPHSARCFSVRKKLLLNSGPDAYVQAQALFLYPADWIAANGARLADDEAHALAHFPGTDNLLRRIHALQTFDVEASLARIQTPTLLIANRDDMLVPWQQSQHLAEALPNARLVLLEYGGHASNITDPLPFQRTLLDFLNAQT.

The protein belongs to the AB hydrolase superfamily. Hydrolase RutD family.

The enzyme catalyses carbamate + 2 H(+) = NH4(+) + CO2. In terms of biological role, involved in pyrimidine catabolism. May facilitate the hydrolysis of carbamate, a reaction that can also occur spontaneously. This is Putative carbamate hydrolase RutD from Pseudomonas savastanoi pv. phaseolicola (strain 1448A / Race 6) (Pseudomonas syringae pv. phaseolicola (strain 1448A / Race 6)).